The chain runs to 169 residues: Cell division inhibitor SulA (169 aa).

The ftsZ binding stretch occupies residues 106–112; it reads ALRTGNY. The lon protease binding stretch occupies residues 162 to 169; that stretch reads KIHSNLYH.

The protein belongs to the SulA family. In terms of assembly, interacts with FtsZ. In terms of processing, is rapidly cleaved and degraded by the Lon protease once DNA damage is repaired.

Functionally, component of the SOS system and an inhibitor of cell division. Accumulation of SulA causes rapid cessation of cell division and the appearance of long, non-septate filaments. In the presence of GTP, binds a polymerization-competent form of FtsZ in a 1:1 ratio, thus inhibiting FtsZ polymerization and therefore preventing it from participating in the assembly of the Z ring. This mechanism prevents the premature segregation of damaged DNA to daughter cells during cell division. The protein is Cell division inhibitor SulA of Escherichia fergusonii (strain ATCC 35469 / DSM 13698 / CCUG 18766 / IAM 14443 / JCM 21226 / LMG 7866 / NBRC 102419 / NCTC 12128 / CDC 0568-73).